The primary structure comprises 109 residues: Cytochrome c-550 (109 aa).

The heme c site is built by cysteine 13, cysteine 16, histidine 17, and methionine 79.

Post-translationally, binds 1 heme c group covalently per subunit.

The chain is Cytochrome c-550 from Nitrobacter winogradskyi (Nitrobacter agilis).